The primary structure comprises 208 residues: Small ribosomal subunit protein uS4A (208 aa).

In terms of domain architecture, S4 RNA-binding spans 98 to 161; sequence LRLDNVVFRM…RKVLRISEAL (64 aa).

Belongs to the universal ribosomal protein uS4 family. In terms of assembly, part of the 30S ribosomal subunit. Contacts protein S5. The interaction surface between S4 and S5 is involved in control of translational fidelity.

Its function is as follows. One of the primary rRNA binding proteins, it binds directly to 16S rRNA where it nucleates assembly of the body of the 30S subunit. Functionally, with S5 and S12 plays an important role in translational accuracy. In Myxococcus xanthus (strain DK1622), this protein is Small ribosomal subunit protein uS4A.